Consider the following 335-residue polypeptide: Nucleoid-associated protein YejK (335 aa).

This sequence belongs to the YejK family.

The protein resides in the cytoplasm. Its subcellular location is the nucleoid. This is Nucleoid-associated protein YejK from Shigella sonnei (strain Ss046).